Reading from the N-terminus, the 481-residue chain is Cysteine--tRNA ligase (481 aa).

Cysteine 27 contributes to the Zn(2+) binding site. The 'HIGH' region motif lies at 29-39; that stretch reads PTVYNYAHIGN. 3 residues coordinate Zn(2+): cysteine 222, histidine 247, and glutamate 251. A 'KMSKS' region motif is present at residues 279–283; the sequence is KMSKS. An ATP-binding site is contributed by lysine 282.

The protein belongs to the class-I aminoacyl-tRNA synthetase family. As to quaternary structure, monomer. Requires Zn(2+) as cofactor.

It is found in the cytoplasm. It carries out the reaction tRNA(Cys) + L-cysteine + ATP = L-cysteinyl-tRNA(Cys) + AMP + diphosphate. This chain is Cysteine--tRNA ligase, found in Borrelia turicatae (strain 91E135).